Consider the following 385-residue polypeptide: 1-deoxy-D-xylulose 5-phosphate reductoisomerase (385 aa).

Positions 11, 12, 13, 14, 39, and 117 each coordinate NADPH. Lys-118 lines the 1-deoxy-D-xylulose 5-phosphate pocket. NADPH is bound at residue Glu-119. Residue Asp-143 coordinates Mn(2+). Residues Ser-144, Glu-145, Ser-170, and His-193 each coordinate 1-deoxy-D-xylulose 5-phosphate. A Mn(2+)-binding site is contributed by Glu-145. Gly-199 contributes to the NADPH binding site. Ser-206, Asn-211, Lys-212, and Glu-215 together coordinate 1-deoxy-D-xylulose 5-phosphate. Glu-215 is a Mn(2+) binding site.

It belongs to the DXR family. Mg(2+) is required as a cofactor. Mn(2+) serves as cofactor.

The catalysed reaction is 2-C-methyl-D-erythritol 4-phosphate + NADP(+) = 1-deoxy-D-xylulose 5-phosphate + NADPH + H(+). The protein operates within isoprenoid biosynthesis; isopentenyl diphosphate biosynthesis via DXP pathway; isopentenyl diphosphate from 1-deoxy-D-xylulose 5-phosphate: step 1/6. Catalyzes the NADPH-dependent rearrangement and reduction of 1-deoxy-D-xylulose-5-phosphate (DXP) to 2-C-methyl-D-erythritol 4-phosphate (MEP). This Thermomicrobium roseum (strain ATCC 27502 / DSM 5159 / P-2) protein is 1-deoxy-D-xylulose 5-phosphate reductoisomerase.